The primary structure comprises 381 residues: Creatine kinase B-type (381 aa).

Residue S4 is modified to Phosphoserine. The Phosphagen kinase N-terminal domain maps to K11 to G98. T35 is subject to Phosphothreonine. A Glycyl lysine isopeptide (Lys-Gly) (interchain with G-Cter in ubiquitin) cross-link involves residue K45. Creatine is bound at residue V72. Residues R96–L110 show a composition bias toward basic and acidic residues. The disordered stretch occupies residues R96 to P123. Glycyl lysine isopeptide (Lys-Gly) (interchain with G-Cter in ubiquitin) cross-links involve residues K101 and K107. Y125 is subject to Phosphotyrosine. The Phosphagen kinase C-terminal domain maps to Y125 to L367. Residues S128–R132, R130, R132, and H191 contribute to the ATP site. An internal MTS-like signal region spans residues R130–R138. S199 is modified (phosphoserine). E232 contacts creatine. R236 contacts ATP. 3'-nitrotyrosine is present on Y269. Creatine is bound at residue S285. ATP contacts are provided by residues R292, R292–H296, R320, R320–V325, and D335. T322 bears the Phosphothreonine mark. A Glycyl lysine isopeptide (Lys-Gly) (interchain with G-Cter in ubiquitin) cross-link involves residue K381.

It belongs to the ATP:guanido phosphotransferase family. In terms of assembly, dimer of identical or non-identical chains, which can be either B (brain type) or M (muscle type). With MM being the major form in skeletal muscle and myocardium, MB existing in myocardium, and BB existing in many tissues, especially brain. Interacts with SLC12A6 (via C-terminus); the interaction may be required for SLC12A6 potassium-chloride cotransport activity. Ubiquitinated by the ECS(ASB9) complex, leading to its degradation by the proteasome.

The protein resides in the cytoplasm. The protein localises to the cytosol. Its subcellular location is the mitochondrion. It is found in the cell membrane. The catalysed reaction is creatine + ATP = N-phosphocreatine + ADP + H(+). Reversibly catalyzes the transfer of phosphate between ATP and various phosphogens (e.g. creatine phosphate). Creatine kinase isoenzymes play a central role in energy transduction in tissues with large, fluctuating energy demands, such as skeletal muscle, heart, brain and spermatozoa. Acts as a key regulator of adaptive thermogenesis as part of the futile creatine cycle: localizes to the mitochondria of thermogenic fat cells and acts by mediating phosphorylation of creatine to initiate a futile cycle of creatine phosphorylation and dephosphorylation. During the futile creatine cycle, creatine and N-phosphocreatine are in a futile cycle, which dissipates the high energy charge of N-phosphocreatine as heat without performing any mechanical or chemical work. The protein is Creatine kinase B-type (CKB) of Sus scrofa (Pig).